We begin with the raw amino-acid sequence, 529 residues long: MSELIEHANAIEWRFERQILRLEPWGKNSLRVRATCAPEFTSALHALLTPESCQAEILRDAETLTLRNGNISAVLNLKGQLAFYNQRGELLLEEMWRQRSTVGIGASEKSQDKYVSALKLDGREFKPLPGGKYQLTVRFEARQGEKLYGMGQYQQPWLDLKGCSLELAQRNSQASVPFVQSSLGYGLLWNNPAIGEASFAKNHSQWTSRVTQEMDYWITAGDSVMEITRQYAKATGTPPAAPEFISGLWQCKLRYRTQQEVLDVAREYHRRNLPLSVMVIDFFHWPNQGTWCFDPVDWPDPRAMVEELESMGIRLMVSVWPTVEARSPLFPQMKAKGWLVTSDRGVQVNLDFMGNTTFFDATHPQARQFVWDTVKKNYFDYGIKLFWLDEAEPEYRAYDFDNYRYHAGPVLEVGNRYPRDFAQGFYDGLRAEGENEIVNLVRCSWAGSQRYGVLAWSGDVHSSFHSFRNQLAAGLNMGLAGIPWWTTDIGGFQGGNIHDPAFHELLIRWFQWAVFCPVLRMHGYREPRI.

Catalysis depends on Asp-389, which acts as the Nucleophile. Residue Glu-392 is part of the active site. The Proton donor role is filled by Asp-459.

The protein belongs to the glycosyl hydrolase 31 family.

This is an uncharacterized protein from Pseudescherichia vulneris (Escherichia vulneris).